Consider the following 103-residue polypeptide: MIKSELVQIVAARNPHLYHRDVENIVNAVLDEITDALAAGNRVELRGFGAFSVKNRPSRSGRNPRTGDSVFVEEKWVPFFKTGKELRERLNPGMNGNDNGEDD.

The protein belongs to the bacterial histone-like protein family. Heterodimer of an alpha and a beta chain.

In terms of biological role, this protein is one of the two subunits of integration host factor, a specific DNA-binding protein that functions in genetic recombination as well as in transcriptional and translational control. This Sinorhizobium medicae (strain WSM419) (Ensifer medicae) protein is Integration host factor subunit beta.